We begin with the raw amino-acid sequence, 344 residues long: Pre-mRNA polyadenylation factor fip1 (344 aa).

Disordered regions lie at residues 1–99 (MSNA…LSTA) and 230–344 (NYNT…RNRY). The span at 28–38 (VTVSNAKSPEQ) shows a compositional bias: polar residues. Residues 39 to 50 (ASEESDDSDIEF) show a composition bias toward acidic residues. A compositionally biased stretch (basic and acidic residues) spans 80–92 (QVEKTAVEVKTTE). Residues 243 to 258 (SGAATPNAYVNNNPSS) are compositionally biased toward low complexity. Positions 271–301 (NITSSAGMTHAQPTHNPTSSYGNGASTNYNA) are enriched in polar residues. A compositionally biased stretch (low complexity) spans 302–317 (SRPPSNHPHSSNYPSS).

It belongs to the FIP1 family.

The protein localises to the nucleus. Functionally, pre-mRNA polyadenylation factor that directly interacts with poly(A) polymerase. The sequence is that of Pre-mRNA polyadenylation factor fip1 from Schizosaccharomyces pombe (strain 972 / ATCC 24843) (Fission yeast).